The following is a 1483-amino-acid chain: Heme-responsive zinc finger transcription factor HAP1 (1483 aa).

Residues M1–S50 are compositionally biased toward polar residues. A disordered region spans residues M1–K56. Zn(2+) is bound by residues C64, C67, C74, C81, C84, and C93. Positions C64 to C93 form a DNA-binding region, zn(2)-C6 fungal-type. The stretch at E105 to S134 forms a coiled coil. The span at V162–H176 shows a compositional bias: polar residues. The segment at V162–N208 is disordered. The span at Q177 to N208 shows a compositional bias: low complexity. Residues K244 to S444 form a heme-responsive; required for HMC formation region. 6 HRM repeats span residues K280–H285, K299–H304, K323–H328, R347–H352, K389–H394, and R415–H420. Polar residues-rich tracts occupy residues S432 to H447 and Q706 to L734. Disordered regions lie at residues S432–H458 and Q706–Q767. Over residues N735–N759 the composition is skewed to low complexity. The stretch at K1192 to Q1197 is one HRM 7 repeat. The segment at T1384–S1411 is disordered. Positions D1388–S1411 are enriched in polar residues.

Binds DNA as a homodimer. Interacts with SRO9 and YDJ1. In the absence of heme, binds to at least four cellular proteins, including YDJ1 and SRO9, forming a high-molecular-weight complex (HMC) which results in repression of its activity and dictates its DNA-binding specificity.

It is found in the nucleus. In terms of biological role, regulation of oxygen dependent gene expression. It modulates the expression of Iso-1 (CYP1) and Iso-2 (CYP3) cytochrome c. In response to heme, promotes transcription of genes encoding functions required for respiration, controlling oxidative damage and repression of anaerobic genes. Binds to the sequence 5'-CGGNNNTNNCGG-3'. The sequence is that of Heme-responsive zinc finger transcription factor HAP1 (HAP1) from Saccharomyces cerevisiae (strain RM11-1a) (Baker's yeast).